Here is a 506-residue protein sequence, read N- to C-terminus: Beta-glucosidase 9 (506 aa).

A signal peptide spans 1-22 (MKHFSLLFIFLVILLATSYSDA). Residues Q42, H139, and 184-185 (NE) each bind a beta-D-glucoside. The active-site Proton donor is E185. Residues C204 and C212 are joined by a disulfide bond. N-linked (GlcNAc...) asparagine glycans are attached at residues N211 and N216. Y328 serves as a coordination point for a beta-D-glucoside. N363 carries N-linked (GlcNAc...) asparagine glycosylation. E396 contacts a beta-D-glucoside. Catalysis depends on E396, which acts as the Nucleophile. N429 carries N-linked (GlcNAc...) asparagine glycosylation. The a beta-D-glucoside site is built by W439 and F455. N461, N483, and N499 each carry an N-linked (GlcNAc...) asparagine glycan.

This sequence belongs to the glycosyl hydrolase 1 family.

It catalyses the reaction Hydrolysis of terminal, non-reducing beta-D-glucosyl residues with release of beta-D-glucose.. The polypeptide is Beta-glucosidase 9 (Arabidopsis thaliana (Mouse-ear cress)).